Reading from the N-terminus, the 202-residue chain is ATP-dependent Clp protease proteolytic subunit (202 aa).

Ser-107 serves as the catalytic Nucleophile. His-132 is a catalytic residue.

Belongs to the peptidase S14 family. Fourteen ClpP subunits assemble into 2 heptameric rings which stack back to back to give a disk-like structure with a central cavity, resembling the structure of eukaryotic proteasomes.

It localises to the cytoplasm. The enzyme catalyses Hydrolysis of proteins to small peptides in the presence of ATP and magnesium. alpha-casein is the usual test substrate. In the absence of ATP, only oligopeptides shorter than five residues are hydrolyzed (such as succinyl-Leu-Tyr-|-NHMec, and Leu-Tyr-Leu-|-Tyr-Trp, in which cleavage of the -Tyr-|-Leu- and -Tyr-|-Trp bonds also occurs).. Cleaves peptides in various proteins in a process that requires ATP hydrolysis. Has a chymotrypsin-like activity. Plays a major role in the degradation of misfolded proteins. This chain is ATP-dependent Clp protease proteolytic subunit, found in Shewanella amazonensis (strain ATCC BAA-1098 / SB2B).